We begin with the raw amino-acid sequence, 21 residues long: Cupiennin-6e (21 aa).

A Serine amide modification is found at S21.

In terms of tissue distribution, expressed by the venom gland.

It is found in the secreted. The polypeptide is Cupiennin-6e (Cupiennius salei (American wandering spider)).